Reading from the N-terminus, the 259-residue chain is Deoxyribose-phosphate aldolase (259 aa).

D102 serves as the catalytic Proton donor/acceptor. The Schiff-base intermediate with acetaldehyde role is filled by K167. The active-site Proton donor/acceptor is K201.

It belongs to the DeoC/FbaB aldolase family. DeoC type 2 subfamily.

It localises to the cytoplasm. It carries out the reaction 2-deoxy-D-ribose 5-phosphate = D-glyceraldehyde 3-phosphate + acetaldehyde. The protein operates within carbohydrate degradation; 2-deoxy-D-ribose 1-phosphate degradation; D-glyceraldehyde 3-phosphate and acetaldehyde from 2-deoxy-alpha-D-ribose 1-phosphate: step 2/2. Its function is as follows. Catalyzes a reversible aldol reaction between acetaldehyde and D-glyceraldehyde 3-phosphate to generate 2-deoxy-D-ribose 5-phosphate. The chain is Deoxyribose-phosphate aldolase from Edwardsiella ictaluri (strain 93-146).